Reading from the N-terminus, the 21-residue chain is Natriuretic peptide TsNP (21 aa).

The cysteines at positions 5 and 21 are disulfide-linked.

As to expression, expressed by the venom gland.

It localises to the secreted. In terms of biological role, scorpion venom natriuretic peptide that increases the perfusion pressure, glomerular filtration rate and urinary flow in the isolated perfused rat kidney assay. Induces a decrease of the percentages of renal transport for sodium, potassium and chloride and an increase of the urinary cGMP concentration. Also down-regulates the mRNA expression of natriuretic peptide receptor 1 (NPR1) in the kidneys whereas it up-regulates those of NPR2, NPR3 and guanylyl cyclase C (GUCY2C) mRNAs. May exhibit hypotensive and vasodepressor activities. The sequence is that of Natriuretic peptide TsNP from Tityus serrulatus (Brazilian scorpion).